The primary structure comprises 257 residues: MAPHDLLTALRDQNPLVHCITNYVAMNIAANVVLAAGASPAMVHAPEEIAEFTPICGALTINIGTISTPWQASMMAAAATASAQNIPWVLDPVAHFISVYRREAAQQLLAQRPTILRGNASEILALTGETGAGKGADSGDSVDAAQGAAKKLAAQFGTVVAITGPVDYLTDGTREAQVSGGSSLMPQVTALGCSQTALMGAYAATGPAFDAALAALAHFKVAGSTAAQRADGPGSFQMHFLDALANTQPFELAQVIR.

Residue Met42 participates in substrate binding. Residues Arg117 and Thr163 each coordinate ATP. Ala190 contributes to the substrate binding site.

Belongs to the Thz kinase family. Requires Mg(2+) as cofactor.

The enzyme catalyses 5-(2-hydroxyethyl)-4-methylthiazole + ATP = 4-methyl-5-(2-phosphooxyethyl)-thiazole + ADP + H(+). It functions in the pathway cofactor biosynthesis; thiamine diphosphate biosynthesis; 4-methyl-5-(2-phosphoethyl)-thiazole from 5-(2-hydroxyethyl)-4-methylthiazole: step 1/1. Functionally, catalyzes the phosphorylation of the hydroxyl group of 4-methyl-5-beta-hydroxyethylthiazole (THZ). This chain is Hydroxyethylthiazole kinase, found in Roseobacter denitrificans (strain ATCC 33942 / OCh 114) (Erythrobacter sp. (strain OCh 114)).